We begin with the raw amino-acid sequence, 513 residues long: Maturase K (513 aa).

The protein belongs to the intron maturase 2 family. MatK subfamily.

The protein localises to the plastid. The protein resides in the chloroplast. In terms of biological role, usually encoded in the trnK tRNA gene intron. Probably assists in splicing its own and other chloroplast group II introns. In Sporobolus indicus (Smut grass), this protein is Maturase K.